A 421-amino-acid chain; its full sequence is Diaminopimelate decarboxylase (421 aa).

At K63 the chain carries N6-(pyridoxal phosphate)lysine. Residues G242 and 278–281 contribute to the pyridoxal 5'-phosphate site; that span reads EPGR. Substrate-binding residues include R281, R317, and Y321. Catalysis depends on C346, which acts as the Proton donor. The substrate site is built by E347 and Y375. A pyridoxal 5'-phosphate-binding site is contributed by Y375.

It belongs to the Orn/Lys/Arg decarboxylase class-II family. LysA subfamily. In terms of assembly, homodimer. Pyridoxal 5'-phosphate serves as cofactor.

The catalysed reaction is meso-2,6-diaminopimelate + H(+) = L-lysine + CO2. Its pathway is amino-acid biosynthesis; L-lysine biosynthesis via DAP pathway; L-lysine from DL-2,6-diaminopimelate: step 1/1. Functionally, specifically catalyzes the decarboxylation of meso-diaminopimelate (meso-DAP) to L-lysine. The protein is Diaminopimelate decarboxylase of Zymomonas mobilis subsp. mobilis (strain ATCC 31821 / ZM4 / CP4).